The primary structure comprises 130 residues: Phosphoribosyl-AMP cyclohydrolase (130 aa).

Asp-78 contributes to the Mg(2+) binding site. Cys-79 contacts Zn(2+). Asp-80 and Asp-82 together coordinate Mg(2+). The Zn(2+) site is built by Cys-96 and Cys-103.

It belongs to the PRA-CH family. Homodimer. Mg(2+) is required as a cofactor. Zn(2+) serves as cofactor.

The protein localises to the cytoplasm. The enzyme catalyses 1-(5-phospho-beta-D-ribosyl)-5'-AMP + H2O = 1-(5-phospho-beta-D-ribosyl)-5-[(5-phospho-beta-D-ribosylamino)methylideneamino]imidazole-4-carboxamide. The protein operates within amino-acid biosynthesis; L-histidine biosynthesis; L-histidine from 5-phospho-alpha-D-ribose 1-diphosphate: step 3/9. Its function is as follows. Catalyzes the hydrolysis of the adenine ring of phosphoribosyl-AMP. This chain is Phosphoribosyl-AMP cyclohydrolase, found in Methylobacillus flagellatus (strain ATCC 51484 / DSM 6875 / VKM B-1610 / KT).